The primary structure comprises 470 residues: Glutamate--tRNA ligase 2 (470 aa).

A 'HIGH' region motif is present at residues 11–21; sequence PSPTGHLHLGG. The short motif at 238-242 is the 'KMSKS' region element; the sequence is KLSKR. K241 contributes to the ATP binding site.

The protein belongs to the class-I aminoacyl-tRNA synthetase family. Glutamate--tRNA ligase type 1 subfamily. Monomer.

The protein resides in the cytoplasm. The catalysed reaction is tRNA(Glu) + L-glutamate + ATP = L-glutamyl-tRNA(Glu) + AMP + diphosphate. Functionally, catalyzes the attachment of glutamate to tRNA(Glu) in a two-step reaction: glutamate is first activated by ATP to form Glu-AMP and then transferred to the acceptor end of tRNA(Glu). In Ehrlichia ruminantium (strain Welgevonden), this protein is Glutamate--tRNA ligase 2.